Here is a 500-residue protein sequence, read N- to C-terminus: Aspartyl/glutamyl-tRNA(Asn/Gln) amidotransferase subunit B (500 aa).

It belongs to the GatB/GatE family. GatB subfamily. Heterotrimer of A, B and C subunits.

The enzyme catalyses L-glutamyl-tRNA(Gln) + L-glutamine + ATP + H2O = L-glutaminyl-tRNA(Gln) + L-glutamate + ADP + phosphate + H(+). The catalysed reaction is L-aspartyl-tRNA(Asn) + L-glutamine + ATP + H2O = L-asparaginyl-tRNA(Asn) + L-glutamate + ADP + phosphate + 2 H(+). Its function is as follows. Allows the formation of correctly charged Asn-tRNA(Asn) or Gln-tRNA(Gln) through the transamidation of misacylated Asp-tRNA(Asn) or Glu-tRNA(Gln) in organisms which lack either or both of asparaginyl-tRNA or glutaminyl-tRNA synthetases. The reaction takes place in the presence of glutamine and ATP through an activated phospho-Asp-tRNA(Asn) or phospho-Glu-tRNA(Gln). In Clavibacter michiganensis subsp. michiganensis (strain NCPPB 382), this protein is Aspartyl/glutamyl-tRNA(Asn/Gln) amidotransferase subunit B.